Consider the following 128-residue polypeptide: Calcitonin gene-related peptide 1 (128 aa).

Positions Met-1–Ala-25 are cleaved as a signal peptide. Residues Ala-26–Gln-80 constitute a propeptide that is removed on maturation. Positions Glu-63 to Ser-83 are disordered. Residues Gly-74–Ser-83 show a composition bias toward polar residues. Cys-84 and Cys-89 are disulfide-bonded. Phe-119 bears the Phenylalanine amide mark. The propeptide occupies Asp-125 to Ala-128.

Belongs to the calcitonin family.

The protein localises to the secreted. Functionally, CGRP1/CALCA is a peptide hormone that induces vasodilation mediated by the CALCRL-RAMP1 receptor complex. Dilates a variety of vessels including the coronary, cerebral and systemic vasculature. Its abundance in the CNS also points toward a neurotransmitter or neuromodulator role. It also elevates platelet cAMP. CGRP1 can also bind and activate CALCR-RAMP1 (AMYR1) receptor complex. The sequence is that of Calcitonin gene-related peptide 1 (CALCA) from Canis lupus familiaris (Dog).